A 344-amino-acid polypeptide reads, in one-letter code: Sorting nexin-16 (344 aa).

Residues 1 to 10 show a composition bias toward pro residues; it reads MATPYVPVPM. 2 disordered regions span residues 1–49 and 83–105; these read MATP…DSSV and SIEY…NWED. Positions 14 to 26 are enriched in polar residues; sequence NSASSFTNNRNQR. Residues 27–40 show a composition bias toward low complexity; it reads SSSFGSVSTSSNSS. Residues 88–105 are compositionally biased toward basic and acidic residues; the sequence is ARPRDTEEQHPDALNWED. The PX domain occupies 105–218; it reads DRPSTPTILG…EFLCLDDPPG (114 aa). A 1,2-diacyl-sn-glycero-3-phospho-(1D-myo-inositol-3-phosphate) contacts are provided by Arg144, Thr146, and Arg184. Ser222 carries the phosphoserine modification. A coiled-coil region spans residues 223-278; the sequence is LEESRAFCETLEETNYHLQRELLEKQKEVESLKKLLGEKQLHIDALETRIRTLSLE.

It belongs to the sorting nexin family. In terms of assembly, homooligomer. Interacts with EGFR.

Its subcellular location is the early endosome membrane. It is found in the late endosome membrane. The protein resides in the cytoplasm. It localises to the lysosome. In terms of biological role, may be involved in several stages of intracellular trafficking. Plays a role in protein transport from early to late endosomes. Plays a role in protein transport to the lysosome. Promotes degradation of EGFR after EGF signaling. This is Sorting nexin-16 (Snx16) from Rattus norvegicus (Rat).